Here is a 596-residue protein sequence, read N- to C-terminus: UvrABC system protein C (596 aa).

The GIY-YIG domain maps to 16–95 (SSPGVYRFYS…IKENKPKYNV (80 aa)). In terms of domain architecture, UVR spans 209–244 (SSVKKYYQEKMLSAAEDMQFEKAQFFKERYNSVLGL).

It belongs to the UvrC family. Interacts with UvrB in an incision complex.

The protein resides in the cytoplasm. The UvrABC repair system catalyzes the recognition and processing of DNA lesions. UvrC both incises the 5' and 3' sides of the lesion. The N-terminal half is responsible for the 3' incision and the C-terminal half is responsible for the 5' incision. This chain is UvrABC system protein C, found in Cytophaga hutchinsonii (strain ATCC 33406 / DSM 1761 / CIP 103989 / NBRC 15051 / NCIMB 9469 / D465).